We begin with the raw amino-acid sequence, 618 residues long: Proline--tRNA ligase (618 aa).

Belongs to the class-II aminoacyl-tRNA synthetase family. ProS type 1 subfamily. In terms of assembly, homodimer.

The protein resides in the cytoplasm. The catalysed reaction is tRNA(Pro) + L-proline + ATP = L-prolyl-tRNA(Pro) + AMP + diphosphate. Functionally, catalyzes the attachment of proline to tRNA(Pro) in a two-step reaction: proline is first activated by ATP to form Pro-AMP and then transferred to the acceptor end of tRNA(Pro). As ProRS can inadvertently accommodate and process non-cognate amino acids such as alanine and cysteine, to avoid such errors it has two additional distinct editing activities against alanine. One activity is designated as 'pretransfer' editing and involves the tRNA(Pro)-independent hydrolysis of activated Ala-AMP. The other activity is designated 'posttransfer' editing and involves deacylation of mischarged Ala-tRNA(Pro). The misacylated Cys-tRNA(Pro) is not edited by ProRS. In Streptococcus pyogenes serotype M5 (strain Manfredo), this protein is Proline--tRNA ligase.